A 148-amino-acid chain; its full sequence is Ribonuclease H (148 aa).

The RNase H type-1 domain maps to 3–144; the sequence is DKEQVVIYTD…ADQLANRGVA (142 aa). The Mg(2+) site is built by Asp-12, Glu-50, Asp-72, and Asp-136. A disordered region spans residues 125–148; sequence GHTGDPGNERADQLANRGVAELPR.

The protein belongs to the RNase H family. In terms of assembly, monomer. Mg(2+) is required as a cofactor.

The protein resides in the cytoplasm. It carries out the reaction Endonucleolytic cleavage to 5'-phosphomonoester.. Functionally, endonuclease that specifically degrades the RNA of RNA-DNA hybrids. This Pseudomonas paraeruginosa (strain DSM 24068 / PA7) (Pseudomonas aeruginosa (strain PA7)) protein is Ribonuclease H.